The chain runs to 475 residues: Sulfate adenylyltransferase subunit 1 (475 aa).

Residues 25–239 form the tr-type G domain; that stretch reads KSLLRFLTCG…EVLETVEIQR (215 aa). Positions 34-41 are G1; that stretch reads GSVDDGKS. 34–41 contributes to the GTP binding site; it reads GSVDDGKS. Residues 92-96 form a G2 region; sequence GITID. The G3 stretch occupies residues 113-116; the sequence is DTPG. GTP-binding positions include 113 to 117 and 168 to 171; these read DTPGH and NKMD. Residues 168–171 form a G4 region; sequence NKMD. Residues 206-208 are G5; it reads SAL.

This sequence belongs to the TRAFAC class translation factor GTPase superfamily. Classic translation factor GTPase family. CysN/NodQ subfamily. In terms of assembly, heterodimer composed of CysD, the smaller subunit, and CysN.

The enzyme catalyses sulfate + ATP + H(+) = adenosine 5'-phosphosulfate + diphosphate. Its pathway is sulfur metabolism; hydrogen sulfide biosynthesis; sulfite from sulfate: step 1/3. Its function is as follows. With CysD forms the ATP sulfurylase (ATPS) that catalyzes the adenylation of sulfate producing adenosine 5'-phosphosulfate (APS) and diphosphate, the first enzymatic step in sulfur assimilation pathway. APS synthesis involves the formation of a high-energy phosphoric-sulfuric acid anhydride bond driven by GTP hydrolysis by CysN coupled to ATP hydrolysis by CysD. In Escherichia fergusonii (strain ATCC 35469 / DSM 13698 / CCUG 18766 / IAM 14443 / JCM 21226 / LMG 7866 / NBRC 102419 / NCTC 12128 / CDC 0568-73), this protein is Sulfate adenylyltransferase subunit 1.